The following is a 222-amino-acid chain: 7-cyano-7-deazaguanine synthase (222 aa).

9-19 contacts ATP; the sequence is ISGGMDSALSA. Zn(2+) contacts are provided by cysteine 188, cysteine 196, cysteine 199, and cysteine 202.

It belongs to the QueC family. The cofactor is Zn(2+).

It catalyses the reaction 7-carboxy-7-deazaguanine + NH4(+) + ATP = 7-cyano-7-deazaguanine + ADP + phosphate + H2O + H(+). The protein operates within purine metabolism; 7-cyano-7-deazaguanine biosynthesis. Its function is as follows. Catalyzes the ATP-dependent conversion of 7-carboxy-7-deazaguanine (CDG) to 7-cyano-7-deazaguanine (preQ(0)). In Sulfurovum sp. (strain NBC37-1), this protein is 7-cyano-7-deazaguanine synthase.